Consider the following 121-residue polypeptide: MWSRRGLGVSRAPLHLLLGVWGPSGRTGGQRKGASLARPGRGGLASCSVGANGKRDVLFLRKTLTNTVEDIQIDNFRRKSDLGVGSPDWKNLLIDVTREDHENSQNNSKRRCKVNCETDQR.

Disordered regions lie at residues 24–43 and 100–121; these read SGRT…GRGG and DHEN…TDQR.

This is an uncharacterized protein from Homo sapiens (Human).